The primary structure comprises 494 residues: Acetyl-coenzyme A carboxylase carboxyl transferase subunit beta, chloroplastic (494 aa).

The CoA carboxyltransferase N-terminal domain occupies 226–494 (LWVQCENCYG…VPLNQNETEH (269 aa)). 4 residues coordinate Zn(2+): Cys-230, Cys-233, Cys-249, and Cys-252. The C4-type zinc-finger motif lies at 230-252 (CENCYGLNYKKFLKSKMNICEQC).

It belongs to the AccD/PCCB family. Acetyl-CoA carboxylase is a heterohexamer composed of biotin carboxyl carrier protein, biotin carboxylase and 2 subunits each of ACCase subunit alpha and ACCase plastid-coded subunit beta (accD). It depends on Zn(2+) as a cofactor.

It is found in the plastid. Its subcellular location is the chloroplast stroma. It carries out the reaction N(6)-carboxybiotinyl-L-lysyl-[protein] + acetyl-CoA = N(6)-biotinyl-L-lysyl-[protein] + malonyl-CoA. The protein operates within lipid metabolism; malonyl-CoA biosynthesis; malonyl-CoA from acetyl-CoA: step 1/1. Functionally, component of the acetyl coenzyme A carboxylase (ACC) complex. Biotin carboxylase (BC) catalyzes the carboxylation of biotin on its carrier protein (BCCP) and then the CO(2) group is transferred by the transcarboxylase to acetyl-CoA to form malonyl-CoA. The polypeptide is Acetyl-coenzyme A carboxylase carboxyl transferase subunit beta, chloroplastic (Coffea arabica (Arabian coffee)).